The primary structure comprises 279 residues: Proteasome subunit beta (279 aa).

Residues 1-53 (MAAAFDPSGRLPDLFTSAGTSSFSAFLSMAAPELLPGRRPLPPGTAADLTPHA) constitute a propeptide, removed in mature form; by autocatalysis. Thr54 functions as the Nucleophile in the catalytic mechanism.

Belongs to the peptidase T1B family. In terms of assembly, the 20S proteasome core is composed of 14 alpha and 14 beta subunits that assemble into four stacked heptameric rings, resulting in a barrel-shaped structure. The two inner rings, each composed of seven catalytic beta subunits, are sandwiched by two outer rings, each composed of seven alpha subunits. The catalytic chamber with the active sites is on the inside of the barrel. Has a gated structure, the ends of the cylinder being occluded by the N-termini of the alpha-subunits. Is capped by the proteasome-associated ATPase, ARC.

It is found in the cytoplasm. The enzyme catalyses Cleavage of peptide bonds with very broad specificity.. Its pathway is protein degradation; proteasomal Pup-dependent pathway. The formation of the proteasomal ATPase ARC-20S proteasome complex, likely via the docking of the C-termini of ARC into the intersubunit pockets in the alpha-rings, may trigger opening of the gate for substrate entry. Interconversion between the open-gate and close-gate conformations leads to a dynamic regulation of the 20S proteasome proteolysis activity. Its function is as follows. Component of the proteasome core, a large protease complex with broad specificity involved in protein degradation. This is Proteasome subunit beta from Salinispora arenicola (strain CNS-205).